Consider the following 247-residue polypeptide: Transcription factor bHLH92 (247 aa).

The bHLH domain maps to 85–134 (ERSRRHMLKERTRREKQKQSYLALHSLLPFATKNDKNSIVEKAVDEIAKL).

In terms of assembly, homodimer.

The protein localises to the nucleus. The polypeptide is Transcription factor bHLH92 (BHLH92) (Arabidopsis thaliana (Mouse-ear cress)).